The sequence spans 472 residues: Tryptophanase (472 aa).

Lysine 270 carries the N6-(pyridoxal phosphate)lysine modification.

This sequence belongs to the beta-eliminating lyase family. As to quaternary structure, homotetramer. The cofactor is pyridoxal 5'-phosphate.

It catalyses the reaction L-tryptophan + H2O = indole + pyruvate + NH4(+). It participates in amino-acid degradation; L-tryptophan degradation via pyruvate pathway; indole and pyruvate from L-tryptophan: step 1/1. The polypeptide is Tryptophanase (tnaA) (Haemophilus influenzae).